We begin with the raw amino-acid sequence, 406 residues long: Phosphoglycerate kinase (406 aa).

Residues 23-25 (DIN), R38, 61-64 (HQGR), R117, and R157 contribute to the substrate site. ATP-binding positions include E331 and 357–360 (GGHI).

It belongs to the phosphoglycerate kinase family. In terms of assembly, monomer.

It is found in the cytoplasm. It catalyses the reaction (2R)-3-phosphoglycerate + ATP = (2R)-3-phospho-glyceroyl phosphate + ADP. Its pathway is carbohydrate degradation; glycolysis; pyruvate from D-glyceraldehyde 3-phosphate: step 2/5. The protein is Phosphoglycerate kinase of Methanopyrus kandleri (strain AV19 / DSM 6324 / JCM 9639 / NBRC 100938).